The chain runs to 87 residues: MAHKKGASSTRNGRDSNAQYLGVKRFGGQVVSAGEIIVRQRGTHFHPGAGVGRGGDDTLFALQAGAVEFGTRRGRRVVNIVAAAAAE.

This sequence belongs to the bacterial ribosomal protein bL27 family.

This chain is Large ribosomal subunit protein bL27, found in Paenarthrobacter aurescens (strain TC1).